Consider the following 257-residue polypeptide: Type III pantothenate kinase (257 aa).

6 to 13 is an ATP binding site; it reads DCGNTNTV. 107 to 110 contributes to the substrate binding site; it reads GPDR. The active-site Proton acceptor is D109. A K(+)-binding site is contributed by D129. T132 serves as a coordination point for ATP. Residue T184 participates in substrate binding.

This sequence belongs to the type III pantothenate kinase family. Homodimer. It depends on NH4(+) as a cofactor. Requires K(+) as cofactor.

Its subcellular location is the cytoplasm. The catalysed reaction is (R)-pantothenate + ATP = (R)-4'-phosphopantothenate + ADP + H(+). Its pathway is cofactor biosynthesis; coenzyme A biosynthesis; CoA from (R)-pantothenate: step 1/5. In terms of biological role, catalyzes the phosphorylation of pantothenate (Pan), the first step in CoA biosynthesis. The sequence is that of Type III pantothenate kinase from Cereibacter sphaeroides (strain ATCC 17025 / ATH 2.4.3) (Rhodobacter sphaeroides).